Here is a 443-residue protein sequence, read N- to C-terminus: Protein Z-dependent protease inhibitor (443 aa).

The N-terminal stretch at 1–23 (MKVVPSLLLSVLLAQVWLVPGLA) is a signal peptide. Positions 24–66 (PSPQSPETPAPQNQTSRVVQAPREEEEDEQEASEEKAGDEEKA) are disordered. N36 carries N-linked (GlcNAc...) asparagine glycosylation. At S56 the chain carries Phosphoserine. Residues 56–66 (SEEKAGDEEKA) are compositionally biased toward basic and acidic residues. A heparin-binding region spans residues 136 to 153 (TKPGLLPSLFKGLRETLS). N180 and N295 each carry an N-linked (GlcNAc...) asparagine glycan.

This sequence belongs to the serpin family. Phosphorylated by FAM20C in the extracellular medium.

The protein localises to the secreted. In terms of biological role, inhibits activity of the coagulation protease factor Xa in the presence of PROZ, calcium and phospholipids. Also inhibits factor XIa in the absence of cofactors. This chain is Protein Z-dependent protease inhibitor (SERPINA10), found in Pongo abelii (Sumatran orangutan).